Reading from the N-terminus, the 194-residue chain is Type II secretion system protein H (194 aa).

The propeptide at 1 to 6 (MTATRG) is leader sequence. Phe-7 bears the N-methylphenylalanine mark. The chain crosses the membrane as a helical span at residues 12 to 32 (ILLVLVLVSASAVAVIATFPV).

This sequence belongs to the GSP H family. Type II secretion is composed of four main components: the outer membrane complex, the inner membrane complex, the cytoplasmic secretion ATPase and the periplasm-spanning pseudopilus. Interacts with core component EpsG. Cleaved by prepilin peptidase. In terms of processing, methylated by prepilin peptidase at the amino group of the N-terminal phenylalanine once the leader sequence is cleaved by prepilin peptidase.

Its subcellular location is the cell inner membrane. Functionally, component of the type II secretion system required for the energy-dependent secretion of extracellular factors such as proteases and toxins from the periplasm. Part of the pseudopilus tip complex that is critical for the recognition and binding of secretion substrates. The protein is Type II secretion system protein H (epsH) of Vibrio cholerae serotype O1 (strain ATCC 39315 / El Tor Inaba N16961).